Consider the following 458-residue polypeptide: Phosphomethylpyrimidine synthase (458 aa).

Substrate contacts are provided by residues Asn80, Met109, Tyr139, His175, 195-197, 236-239, and Glu275; these read SRG and DSLR. His279 provides a ligand contact to Zn(2+). Tyr302 contacts substrate. Zn(2+) is bound at residue His343. 3 residues coordinate [4Fe-4S] cluster: Cys423, Cys426, and Cys431.

Belongs to the ThiC family. [4Fe-4S] cluster serves as cofactor.

It carries out the reaction 5-amino-1-(5-phospho-beta-D-ribosyl)imidazole + S-adenosyl-L-methionine = 4-amino-2-methyl-5-(phosphooxymethyl)pyrimidine + CO + 5'-deoxyadenosine + formate + L-methionine + 3 H(+). The protein operates within cofactor biosynthesis; thiamine diphosphate biosynthesis. In terms of biological role, catalyzes the synthesis of the hydroxymethylpyrimidine phosphate (HMP-P) moiety of thiamine from aminoimidazole ribotide (AIR) in a radical S-adenosyl-L-methionine (SAM)-dependent reaction. The sequence is that of Phosphomethylpyrimidine synthase from Acaryochloris marina (strain MBIC 11017).